The chain runs to 249 residues: 3-deoxy-manno-octulosonate cytidylyltransferase (249 aa).

It belongs to the KdsB family.

Its subcellular location is the cytoplasm. The catalysed reaction is 3-deoxy-alpha-D-manno-oct-2-ulosonate + CTP = CMP-3-deoxy-beta-D-manno-octulosonate + diphosphate. Its pathway is nucleotide-sugar biosynthesis; CMP-3-deoxy-D-manno-octulosonate biosynthesis; CMP-3-deoxy-D-manno-octulosonate from 3-deoxy-D-manno-octulosonate and CTP: step 1/1. The protein operates within bacterial outer membrane biogenesis; lipopolysaccharide biosynthesis. In terms of biological role, activates KDO (a required 8-carbon sugar) for incorporation into bacterial lipopolysaccharide in Gram-negative bacteria. The protein is 3-deoxy-manno-octulosonate cytidylyltransferase of Serratia proteamaculans (strain 568).